Consider the following 481-residue polypeptide: ATP synthase subunit beta, chloroplastic (481 aa).

161-168 is an ATP binding site; it reads GGAGVGKT.

The protein belongs to the ATPase alpha/beta chains family. F-type ATPases have 2 components, CF(1) - the catalytic core - and CF(0) - the membrane proton channel. CF(1) has five subunits: alpha(3), beta(3), gamma(1), delta(1), epsilon(1). CF(0) has four main subunits: a(1), b(1), b'(1) and c(9-12).

It is found in the plastid. It localises to the chloroplast thylakoid membrane. It catalyses the reaction ATP + H2O + 4 H(+)(in) = ADP + phosphate + 5 H(+)(out). In terms of biological role, produces ATP from ADP in the presence of a proton gradient across the membrane. The catalytic sites are hosted primarily by the beta subunits. This is ATP synthase subunit beta, chloroplastic from Dictyota dichotoma.